The sequence spans 234 residues: Leucyl/phenylalanyl-tRNA--protein transferase (234 aa).

This sequence belongs to the L/F-transferase family.

It localises to the cytoplasm. It catalyses the reaction N-terminal L-lysyl-[protein] + L-leucyl-tRNA(Leu) = N-terminal L-leucyl-L-lysyl-[protein] + tRNA(Leu) + H(+). The enzyme catalyses N-terminal L-arginyl-[protein] + L-leucyl-tRNA(Leu) = N-terminal L-leucyl-L-arginyl-[protein] + tRNA(Leu) + H(+). It carries out the reaction L-phenylalanyl-tRNA(Phe) + an N-terminal L-alpha-aminoacyl-[protein] = an N-terminal L-phenylalanyl-L-alpha-aminoacyl-[protein] + tRNA(Phe). Functions in the N-end rule pathway of protein degradation where it conjugates Leu, Phe and, less efficiently, Met from aminoacyl-tRNAs to the N-termini of proteins containing an N-terminal arginine or lysine. This chain is Leucyl/phenylalanyl-tRNA--protein transferase, found in Myxococcus xanthus (strain DK1622).